A 197-amino-acid chain; its full sequence is Putative double homeobox protein 3 (197 aa).

2 DNA-binding regions (homeobox) span residues 46–105 (GRRM…LRQH) and 121–180 (GRRK…WGQS). Residues 102 to 127 (LRQHRRQSRPWPGRRDPQKGRRKRTA) form a disordered region.

It belongs to the paired homeobox family. Expressed in hepatoma Hep3B cells.

The protein localises to the nucleus. This chain is Putative double homeobox protein 3 (DUX3), found in Homo sapiens (Human).